Reading from the N-terminus, the 167-residue chain is NAD(P)H-quinone oxidoreductase subunit I, chloroplastic (167 aa).

4Fe-4S ferredoxin-type domains are found at residues 55-84 and 95-124; these read GRIHFEFDKCIACEVCVRVCPIDLPVVDWK and LNYSIDFGICIFCGNCVEYCPTNCLSMTEE. Positions 64, 67, 70, 74, 104, 107, 110, and 114 each coordinate [4Fe-4S] cluster.

The protein belongs to the complex I 23 kDa subunit family. As to quaternary structure, NDH is composed of at least 16 different subunits, 5 of which are encoded in the nucleus. Requires [4Fe-4S] cluster as cofactor.

Its subcellular location is the plastid. It localises to the chloroplast thylakoid membrane. It catalyses the reaction a plastoquinone + NADH + (n+1) H(+)(in) = a plastoquinol + NAD(+) + n H(+)(out). The catalysed reaction is a plastoquinone + NADPH + (n+1) H(+)(in) = a plastoquinol + NADP(+) + n H(+)(out). Its function is as follows. NDH shuttles electrons from NAD(P)H:plastoquinone, via FMN and iron-sulfur (Fe-S) centers, to quinones in the photosynthetic chain and possibly in a chloroplast respiratory chain. The immediate electron acceptor for the enzyme in this species is believed to be plastoquinone. Couples the redox reaction to proton translocation, and thus conserves the redox energy in a proton gradient. The polypeptide is NAD(P)H-quinone oxidoreductase subunit I, chloroplastic (Vitis vinifera (Grape)).